The primary structure comprises 308 residues: Phosphate transport system permease protein PstA 1 (308 aa).

6 helical membrane-spanning segments follow: residues 36–56 (FFFT…WVVI), 96–116 (AGVA…YLVE), 132–152 (VLAG…WIAT), 155–175 (FQQS…PVVV), 204–224 (IVRI…LLSI), and 276–296 (WGAA…AAMI). An ABC transmembrane type-1 domain is found at 89–297 (LYGTLVQAGV…TINLAAAMIR (209 aa)).

The protein belongs to the binding-protein-dependent transport system permease family. CysTW subfamily. The complex is composed of two ATP-binding proteins (PstB), two transmembrane proteins (PstC and PstA) and a solute-binding protein (PstS).

It is found in the cell membrane. Its function is as follows. Part of the binding-protein-dependent transport system for phosphate; probably responsible for the translocation of the substrate across the membrane. In Mycobacterium tuberculosis (strain ATCC 25618 / H37Rv), this protein is Phosphate transport system permease protein PstA 1 (pstA1).